A 276-amino-acid polypeptide reads, in one-letter code: Glutamate racemase (276 aa).

Residues 10-11 and 42-43 contribute to the substrate site; these read DS and YG. The active-site Proton donor/acceptor is the Cys-74. 75–76 contributes to the substrate binding site; the sequence is NT. Catalysis depends on Cys-185, which acts as the Proton donor/acceptor. 186–187 is a substrate binding site; that stretch reads TH.

It belongs to the aspartate/glutamate racemases family.

It carries out the reaction L-glutamate = D-glutamate. Its pathway is cell wall biogenesis; peptidoglycan biosynthesis. Provides the (R)-glutamate required for cell wall biosynthesis. The protein is Glutamate racemase of Levilactobacillus brevis (strain ATCC 367 / BCRC 12310 / CIP 105137 / JCM 1170 / LMG 11437 / NCIMB 947 / NCTC 947) (Lactobacillus brevis).